Reading from the N-terminus, the 553-residue chain is Probable inactive serine/threonine-protein kinase samkD (553 aa).

Residues 24–90 (WDNETVCKWL…FEYQILKNCY (67 aa)) enclose the SAM domain. The region spanning 134–393 (YQYIETISKN…SKELLKSFWF (260 aa)) is the Protein kinase domain. ATP is bound by residues 140–148 (ISKNKFCEI) and Lys165.

This sequence belongs to the protein kinase superfamily. Ser/Thr protein kinase family.

This chain is Probable inactive serine/threonine-protein kinase samkD (samkD), found in Dictyostelium discoideum (Social amoeba).